A 437-amino-acid chain; its full sequence is Ribosomal protein uS12 methylthiotransferase RimO (437 aa).

The MTTase N-terminal domain occupies 3–118 (KKFYITTLGC…AGKILREKFP (116 aa)). 6 residues coordinate [4Fe-4S] cluster: Cys12, Cys48, Cys81, Cys157, Cys161, and Cys164. Residues 143–370 (NYSKPYAYVK…RDSHLEILEE (228 aa)) form the Radical SAM core domain. Positions 373-437 (ESRIGRTYDA…YEYDMNGTWV (65 aa)) constitute a TRAM domain.

This sequence belongs to the methylthiotransferase family. RimO subfamily. [4Fe-4S] cluster is required as a cofactor.

It localises to the cytoplasm. The catalysed reaction is L-aspartate(89)-[ribosomal protein uS12]-hydrogen + (sulfur carrier)-SH + AH2 + 2 S-adenosyl-L-methionine = 3-methylsulfanyl-L-aspartate(89)-[ribosomal protein uS12]-hydrogen + (sulfur carrier)-H + 5'-deoxyadenosine + L-methionine + A + S-adenosyl-L-homocysteine + 2 H(+). Its function is as follows. Catalyzes the methylthiolation of an aspartic acid residue of ribosomal protein uS12. In Leptospira interrogans serogroup Icterohaemorrhagiae serovar copenhageni (strain Fiocruz L1-130), this protein is Ribosomal protein uS12 methylthiotransferase RimO.